Consider the following 475-residue polypeptide: Glycogen synthase (475 aa).

Lys15 provides a ligand contact to ADP-alpha-D-glucose.

The protein belongs to the glycosyltransferase 1 family. Bacterial/plant glycogen synthase subfamily.

The enzyme catalyses [(1-&gt;4)-alpha-D-glucosyl](n) + ADP-alpha-D-glucose = [(1-&gt;4)-alpha-D-glucosyl](n+1) + ADP + H(+). The protein operates within glycan biosynthesis; glycogen biosynthesis. Synthesizes alpha-1,4-glucan chains using ADP-glucose. The protein is Glycogen synthase of Anaeromyxobacter sp. (strain Fw109-5).